Reading from the N-terminus, the 264-residue chain is Small ribosomal subunit protein uS2 (264 aa).

The protein belongs to the universal ribosomal protein uS2 family.

In Helicobacter pylori (strain ATCC 700392 / 26695) (Campylobacter pylori), this protein is Small ribosomal subunit protein uS2 (rpsB).